A 246-amino-acid chain; its full sequence is NH(3)-dependent NAD(+) synthetase (246 aa).

Gly-29–Ser-36 is an ATP binding site. Asp-35 provides a ligand contact to Mg(2+). Arg-110 lines the deamido-NAD(+) pocket. Thr-130 serves as a coordination point for ATP. Mg(2+) is bound at residue Glu-135. The ATP site is built by Lys-159 and Ser-181.

This sequence belongs to the NAD synthetase family. Homodimer.

It carries out the reaction deamido-NAD(+) + NH4(+) + ATP = AMP + diphosphate + NAD(+) + H(+). It participates in cofactor biosynthesis; NAD(+) biosynthesis; NAD(+) from deamido-NAD(+) (ammonia route): step 1/1. Catalyzes the ATP-dependent amidation of deamido-NAD to form NAD. Uses ammonia as a nitrogen source. The sequence is that of NH(3)-dependent NAD(+) synthetase from Campylobacter jejuni subsp. jejuni serotype O:6 (strain 81116 / NCTC 11828).